A 514-amino-acid chain; its full sequence is Proline--tRNA ligase (514 aa).

This sequence belongs to the class-II aminoacyl-tRNA synthetase family. ProS type 3 subfamily. As to quaternary structure, homodimer.

The protein resides in the cytoplasm. It carries out the reaction tRNA(Pro) + L-proline + ATP = L-prolyl-tRNA(Pro) + AMP + diphosphate. In terms of biological role, catalyzes the attachment of proline to tRNA(Pro) in a two-step reaction: proline is first activated by ATP to form Pro-AMP and then transferred to the acceptor end of tRNA(Pro). This Erythrobacter litoralis (strain HTCC2594) protein is Proline--tRNA ligase.